The sequence spans 226 residues: MRMNLSELEIRILGCLMEKELATPEIYPLTLNALASACNQKSNRDPVMSVTEADLLRGLEALGARGLARLTTTGGRVAKYCHSATDNLRLAAAERAVLAELMLRGAQTAAELRSRGERMTEMGDIESVEETLRKLQQHGPPLVVRLPRQPGRKEQRYLQVFAGLPEFPDELDISEEMEPAAGPRAAAGRPAVGNERLERLEEGIGSLRQEIAALRREVQEMMDAFA.

It belongs to the UPF0502 family.

The sequence is that of UPF0502 protein Gbem_0194 from Citrifermentans bemidjiense (strain ATCC BAA-1014 / DSM 16622 / JCM 12645 / Bem) (Geobacter bemidjiensis).